Reading from the N-terminus, the 288-residue chain is Light-independent protochlorophyllide reductase iron-sulfur ATP-binding protein (288 aa).

ATP-binding positions include Gly-10 to Thr-15 and Lys-39. Ser-14 contacts Mg(2+). Residues Cys-95 and Cys-129 each coordinate [4Fe-4S] cluster. ATP is bound at residue Asn-180–Arg-181.

This sequence belongs to the NifH/BchL/ChlL family. Homodimer. Protochlorophyllide reductase is composed of three subunits; ChlL, ChlN and ChlB. The cofactor is [4Fe-4S] cluster.

The enzyme catalyses chlorophyllide a + oxidized 2[4Fe-4S]-[ferredoxin] + 2 ADP + 2 phosphate = protochlorophyllide a + reduced 2[4Fe-4S]-[ferredoxin] + 2 ATP + 2 H2O. It participates in porphyrin-containing compound metabolism; chlorophyll biosynthesis (light-independent). Component of the dark-operative protochlorophyllide reductase (DPOR) that uses Mg-ATP and reduced ferredoxin to reduce ring D of protochlorophyllide (Pchlide) to form chlorophyllide a (Chlide). This reaction is light-independent. The L component serves as a unique electron donor to the NB-component of the complex, and binds Mg-ATP. This is Light-independent protochlorophyllide reductase iron-sulfur ATP-binding protein from Nostoc sp. (strain PCC 7120 / SAG 25.82 / UTEX 2576).